The following is a 114-amino-acid chain: Large ribosomal subunit protein bL20c (114 aa).

It belongs to the bacterial ribosomal protein bL20 family.

The protein localises to the plastid. It localises to the chloroplast. Functionally, binds directly to 23S ribosomal RNA and is necessary for the in vitro assembly process of the 50S ribosomal subunit. It is not involved in the protein synthesizing functions of that subunit. This Guillardia theta (Cryptophyte) protein is Large ribosomal subunit protein bL20c (rpl20).